The primary structure comprises 1213 residues: DNA-directed RNA polymerase subunit beta' (1213 aa).

The Zn(2+) site is built by Cys60, Cys62, Cys75, and Cys78. Mg(2+) is bound by residues Asp450, Asp452, and Asp454. Cys819, Cys893, Cys900, and Cys903 together coordinate Zn(2+).

The protein belongs to the RNA polymerase beta' chain family. In terms of assembly, the RNAP catalytic core consists of 2 alpha, 1 beta, 1 beta' and 1 omega subunit. When a sigma factor is associated with the core the holoenzyme is formed, which can initiate transcription. Requires Mg(2+) as cofactor. Zn(2+) is required as a cofactor.

It catalyses the reaction RNA(n) + a ribonucleoside 5'-triphosphate = RNA(n+1) + diphosphate. DNA-dependent RNA polymerase catalyzes the transcription of DNA into RNA using the four ribonucleoside triphosphates as substrates. This is DNA-directed RNA polymerase subunit beta' from Streptococcus pyogenes serotype M1.